Here is a 285-residue protein sequence, read N- to C-terminus: MAIPKLQAYALPESHDIPQNKVDWAFEPQRAALLIHDMQDYFVSFWGENCPMMEQVIANIAALRDYCKQHNIPVYYTAQPKEQSDEDRALLNDMWGPGLTRSPEQQKVVDRLTPDADDTVLVKWRYSAFHRSPLEQMLKESGRNQLIITGVYAHIGCMTTATDAFMRDIKPFMVADALADFSRDEHLMSLKYVAGRSGRVVMTEELLPAPIPASKAALREVILPLLDESDEPFDDDNLIDYGLDSVRMMALAARWRKVHGDIDFVMLAKNPTIDAWWKLLSREVK.

The segment at 2–213 (AIPKLQAYAL…EELLPAPIPA (212 aa)) is isochorismatase. In terms of domain architecture, Carrier spans 209–284 (APIPASKAAL…AWWKLLSREV (76 aa)). Mg(2+)-binding residues include Asp227, Gly242, and Asp244. Position 245 is an O-(pantetheine 4'-phosphoryl)serine (Ser245).

The protein in the N-terminal section; belongs to the isochorismatase family. In terms of assembly, proteins EntB, EntD, EntE, and EntF form a multienzyme complex called enterobactin synthase. Homodimer. Also forms a specific pairwise interaction with EntC; this interaction likely facilitates substrate channeling to connect the EntB and EntC active sites. The cofactor is Mg(2+). In terms of processing, 4'-phosphopantetheine is transferred from CoA to a specific serine of apo-EntB by EntD. Holo-EntB so formed is then acylated with 2,3-dihydroxybenzoate in a reaction catalyzed by EntE.

The protein resides in the cytoplasm. It catalyses the reaction 3 2,3-dihydroxybenzoate + 3 L-serine + 6 ATP = enterobactin + 6 AMP + 6 diphosphate + 4 H(+). The enzyme catalyses isochorismate + H2O = (2S,3S)-2,3-dihydroxy-2,3-dihydrobenzoate + pyruvate. It participates in siderophore biosynthesis; enterobactin biosynthesis. Its function is as follows. Involved in the biosynthesis of the siderophore enterobactin (enterochelin), which is a macrocyclic trimeric lactone of N-(2,3-dihydroxybenzoyl)-serine. The serine trilactone serves as a scaffolding for the three catechol functionalities that provide hexadentate coordination for the tightly ligated iron(3+) atoms. EntB is a bifunctional protein that serves as an isochorismate lyase and an aryl carrier protein (ArCP). Catalyzes the conversion of isochorismate to 2,3-dihydro-2,3-dihydroxybenzoate (2,3-diDHB), the precursor of 2,3-dihydroxybenzoate (DHB). In the enterobactin assembly, EntB functions as an aryl carrier protein phosphopantetheinylated near the C terminus by EntD to yield holo-EntB, which is then acylated by EntE with 2,3-dihydroxybenzoyl-AMP to form DHB-holo-EntB. Then this product will serve in the formation of the amide bond between 2,3-dihydroxybenzoate (DHB) and L-serine. This chain is Enterobactin synthase component B, found in Escherichia coli O157:H7.